The chain runs to 267 residues: L-aspartate dehydrogenase (267 aa).

Positions 124 and 190 each coordinate NAD(+). His218 is an active-site residue.

This sequence belongs to the L-aspartate dehydrogenase family.

It carries out the reaction L-aspartate + NADP(+) + H2O = oxaloacetate + NH4(+) + NADPH + H(+). The enzyme catalyses L-aspartate + NAD(+) + H2O = oxaloacetate + NH4(+) + NADH + H(+). Its pathway is cofactor biosynthesis; NAD(+) biosynthesis; iminoaspartate from L-aspartate (dehydrogenase route): step 1/1. Functionally, specifically catalyzes the NAD or NADP-dependent dehydrogenation of L-aspartate to iminoaspartate. The chain is L-aspartate dehydrogenase from Methanococcus maripaludis (strain C6 / ATCC BAA-1332).